Consider the following 553-residue polypeptide: Thermosome subunit beta (553 aa).

The disordered stretch occupies residues 534 to 553 (KKSEGKTGEKKESEKGKEED).

The protein belongs to the TCP-1 chaperonin family. In terms of assembly, forms a Heterooligomeric complex of two stacked eight-membered rings.

Its function is as follows. Molecular chaperone; binds unfolded polypeptides in vitro, and has a weak ATPase activity. This chain is Thermosome subunit beta (thsB), found in Sulfolobus acidocaldarius (strain ATCC 33909 / DSM 639 / JCM 8929 / NBRC 15157 / NCIMB 11770).